We begin with the raw amino-acid sequence, 202 residues long: Casparian strip membrane protein 1 (202 aa).

Residues 1–13 are compositionally biased toward polar residues; that stretch reads MEKSESSTIQIAE. The segment at 1–30 is disordered; the sequence is MEKSESSTIQIAESSKDRKGKAPLLPPPVH. Residues 1–42 are Cytoplasmic-facing; it reads MEKSESSTIQIAESSKDRKGKAPLLPPPVHHERAAGYKRGVA. A helical membrane pass occupies residues 43–63; that stretch reads IFDLILRISAATAALAATIVM. The Extracellular portion of the chain corresponds to 64–90; that stretch reads GTTEQTLPFFTQFFQFRASYDDLPTFT. A helical membrane pass occupies residues 91–111; sequence FFVIAMAIVTGYLILSVPFSI. The Cytoplasmic portion of the chain corresponds to 112 to 130; sequence VCIARPVVAAPRILLILCD. A helical transmembrane segment spans residues 131 to 151; sequence TLTVTLATSAAGASAAIVYLA. The Extracellular segment spans residues 152-177; that stretch reads HNGXSDANWLAICQQFNDFCQRVSGA. A helical membrane pass occupies residues 178-198; the sequence is VVAAFVSAVLLIFLVVLSAIV. Residues 199–202 are Cytoplasmic-facing; it reads LKKH.

This sequence belongs to the Casparian strip membrane proteins (CASP) family. As to quaternary structure, homodimer and heterodimers.

Its subcellular location is the cell membrane. In terms of biological role, regulates membrane-cell wall junctions and localized cell wall deposition. Required for establishment of the Casparian strip membrane domain (CSD) and the subsequent formation of Casparian strips, a cell wall modification of the root endodermis that determines an apoplastic barrier between the intraorganismal apoplasm and the extraorganismal apoplasm and prevents lateral diffusion. This is Casparian strip membrane protein 1 from Triphysaria pusilla (Dwarf owl's-clover).